Consider the following 301-residue polypeptide: Troponin T, cardiac muscle (301 aa).

The segment covering Met1–Val72 has biased composition (acidic residues). Disordered regions lie at residues Met1–Arg97 and Asn125–Ile224. Position 2 is an N-acetylserine (Ser2). Position 2 is a phosphoserine; by CK2 (Ser2). Composition is skewed to basic and acidic residues over residues Asn125–Arg186 and Gln206–Ile224. The residue at position 207 (Thr207) is a Phosphothreonine; by PKC/PRKCA. Ser211 carries the post-translational modification Phosphoserine; by PKC/PRKCA. Thr216 is subject to Phosphothreonine; by PKC/PRKCA and RAF1. At Thr297 the chain carries Phosphothreonine; by PKC/PRKCA.

This sequence belongs to the troponin T family. Post-translationally, phosphorylation at Thr-216 by PRKCA induces significant reduction in myofilament calcium sensitivity and actomyosin ATPase activity.

In terms of biological role, troponin T is the tropomyosin-binding subunit of troponin, the thin filament regulatory complex which confers calcium-sensitivity to striated muscle actomyosin ATPase activity. The sequence is that of Troponin T, cardiac muscle (Tnnt2) from Mus musculus (Mouse).